The chain runs to 175 residues: NADH-quinone oxidoreductase subunit I 1 (175 aa).

4Fe-4S ferredoxin-type domains follow at residues 44 to 74 (LNRW…VESA) and 90 to 119 (RVYQ…MIND). 8 residues coordinate [4Fe-4S] cluster: Cys54, Cys57, Cys60, Cys64, Cys99, Cys102, Cys105, and Cys109.

This sequence belongs to the complex I 23 kDa subunit family. NDH-1 is composed of 14 different subunits. Subunits NuoA, H, J, K, L, M, N constitute the membrane sector of the complex. Requires [4Fe-4S] cluster as cofactor.

It is found in the cell membrane. The enzyme catalyses a quinone + NADH + 5 H(+)(in) = a quinol + NAD(+) + 4 H(+)(out). NDH-1 shuttles electrons from NADH, via FMN and iron-sulfur (Fe-S) centers, to quinones in the respiratory chain. The immediate electron acceptor for the enzyme in this species is believed to be menaquinone. Couples the redox reaction to proton translocation (for every two electrons transferred, four hydrogen ions are translocated across the cytoplasmic membrane), and thus conserves the redox energy in a proton gradient. This chain is NADH-quinone oxidoreductase subunit I 1, found in Mycolicibacterium paratuberculosis (strain ATCC BAA-968 / K-10) (Mycobacterium paratuberculosis).